A 431-amino-acid polypeptide reads, in one-letter code: Glucose-1-phosphate adenylyltransferase (431 aa).

Residue Lys39 coordinates beta-D-fructose 1,6-bisphosphate. AMP contacts are provided by Arg40, His46, and Arg52. Tyr114 is a binding site for alpha-D-glucose 1-phosphate. Arg130 contacts AMP. Residues Gly179, 194–195 (EK), and Ser212 each bind alpha-D-glucose 1-phosphate. Glu370 and Arg386 together coordinate AMP. Residues 419–423 (REMLR) and 429–431 (QER) contribute to the beta-D-fructose 1,6-bisphosphate site.

Belongs to the bacterial/plant glucose-1-phosphate adenylyltransferase family. As to quaternary structure, homotetramer.

It catalyses the reaction alpha-D-glucose 1-phosphate + ATP + H(+) = ADP-alpha-D-glucose + diphosphate. The protein operates within glycan biosynthesis; glycogen biosynthesis. Its activity is regulated as follows. Allosterically activated by fructose-1,6-bisphosphate (F16BP) and inhibited by AMP. Involved in the biosynthesis of ADP-glucose, a building block required for the elongation reactions to produce glycogen. Catalyzes the reaction between ATP and alpha-D-glucose 1-phosphate (G1P) to produce pyrophosphate and ADP-Glc. In Salmonella dublin (strain CT_02021853), this protein is Glucose-1-phosphate adenylyltransferase.